Consider the following 747-residue polypeptide: Homeobox-leucine zipper protein GLABRA 2 (747 aa).

Residues 31–112 are disordered; the sequence is RNASSGSTNP…KKYHRHTTDQ (82 aa). Residues 58–68 are compositionally biased toward polar residues; it reads EMSSENSGPTR. The segment covering 73 to 90 has biased composition (acidic residues); sequence EDLEGEDHDDEEEEEEDG. A compositionally biased stretch (basic residues) spans 97-107; that stretch reads TNKRKRKKYHR. The homeobox DNA-binding region spans 101–160; it reads KRKKYHRHTTDQIRHMEALFKETPHPDEKQRQQLSKQLGLAPRQVKFWFQNRRTQIKAIQ. The stretch at 155 to 223 forms a coiled coil; sequence QIKAIQERHE…LDKLRAALGR (69 aa). One can recognise an START domain in the interval 250–489; that stretch reads FALEKSRIAE…LQLHCERLVF (240 aa).

Belongs to the HD-ZIP homeobox family. Class IV subfamily. In terms of assembly, interacts with GIR1 and GIR2. In terms of tissue distribution, expressed in individual developing trichome cells of the emerging leaf primordia. Expressed in differentiating hairless cells of root epidermis.

It localises to the nucleus. Functionally, transcription factor involved in the determination of epidermal cell identity. Required for correct morphological development and maturation of trichomes. Regulates the frequency of trichome initiation and determines trichome spacing. Acts as a negative factor for root hair development. Required for ectopic repression of root hair development in a subset of epidermal cells. May suppress hair formation in root epidermis by promoting differentiation into hairless epidermal cells. Directly suppresses the bHLH transcription factor genes, RHD6, RSL1, RSL2, LRL1, and LRL2, which have diverse functions in root hair development. Required for normal development of seed coat mucilage. Involved in the control of seed oil accumulation. Acts as a negative regulator of anthocyanin biosynthesis. May directly repress the expression of some component genes from the MYB-bHLH-WD40 (MBW) transcriptional activator complex. The MBW complex activates the transcription of late biosynthesis genes in the flavonoid pathway, leading to the production of anthocyanins. In Arabidopsis thaliana (Mouse-ear cress), this protein is Homeobox-leucine zipper protein GLABRA 2.